The following is a 346-amino-acid chain: uncharacterized protein (346 aa).

The segment at 10–109 (WDFIMTDPSS…SNSNGNNSPV (100 aa)) is disordered. Residues 26-44 (KGSSKNGSPKTSSPKSGSP) are compositionally biased toward low complexity. The span at 56–67 (NQQLLQNDSINL) shows a compositional bias: polar residues. A compositionally biased stretch (low complexity) spans 94–109 (KSSVVPSNSNGNNSPV).

This is an uncharacterized protein from Dictyostelium discoideum (Social amoeba).